A 457-amino-acid polypeptide reads, in one-letter code: Bifunctional protein GlmU (457 aa).

The segment at 1–230 is pyrophosphorylase; that stretch reads MSKRYAVVLA…FEESLGVNDR (230 aa). UDP-N-acetyl-alpha-D-glucosamine-binding positions include 9 to 12, Lys23, Gln73, and 78 to 79; these read LAAG and GT. Asp103 lines the Mg(2+) pocket. Positions 140, 155, 170, and 228 each coordinate UDP-N-acetyl-alpha-D-glucosamine. Position 228 (Asn228) interacts with Mg(2+). The linker stretch occupies residues 231-251; that stretch reads IALAEASKLMQRRINDNHMRN. The interval 252–457 is N-acetyltransferase; the sequence is GVTLVNPENT…DYAKRLNHGK (206 aa). UDP-N-acetyl-alpha-D-glucosamine-binding residues include Arg333 and Lys351. The active-site Proton acceptor is His363. Residues Tyr366 and Asn377 each coordinate UDP-N-acetyl-alpha-D-glucosamine. Acetyl-CoA is bound by residues 386–387, Ala423, and Arg440; that span reads NY.

The protein in the N-terminal section; belongs to the N-acetylglucosamine-1-phosphate uridyltransferase family. In the C-terminal section; belongs to the transferase hexapeptide repeat family. Homotrimer. Mg(2+) serves as cofactor.

It is found in the cytoplasm. The catalysed reaction is alpha-D-glucosamine 1-phosphate + acetyl-CoA = N-acetyl-alpha-D-glucosamine 1-phosphate + CoA + H(+). It carries out the reaction N-acetyl-alpha-D-glucosamine 1-phosphate + UTP + H(+) = UDP-N-acetyl-alpha-D-glucosamine + diphosphate. The protein operates within nucleotide-sugar biosynthesis; UDP-N-acetyl-alpha-D-glucosamine biosynthesis; N-acetyl-alpha-D-glucosamine 1-phosphate from alpha-D-glucosamine 6-phosphate (route II): step 2/2. It functions in the pathway nucleotide-sugar biosynthesis; UDP-N-acetyl-alpha-D-glucosamine biosynthesis; UDP-N-acetyl-alpha-D-glucosamine from N-acetyl-alpha-D-glucosamine 1-phosphate: step 1/1. Its pathway is bacterial outer membrane biogenesis; LPS lipid A biosynthesis. Catalyzes the last two sequential reactions in the de novo biosynthetic pathway for UDP-N-acetylglucosamine (UDP-GlcNAc). The C-terminal domain catalyzes the transfer of acetyl group from acetyl coenzyme A to glucosamine-1-phosphate (GlcN-1-P) to produce N-acetylglucosamine-1-phosphate (GlcNAc-1-P), which is converted into UDP-GlcNAc by the transfer of uridine 5-monophosphate (from uridine 5-triphosphate), a reaction catalyzed by the N-terminal domain. This chain is Bifunctional protein GlmU, found in Listeria welshimeri serovar 6b (strain ATCC 35897 / DSM 20650 / CCUG 15529 / CIP 8149 / NCTC 11857 / SLCC 5334 / V8).